The following is a 66-amino-acid chain: Beta-toxin Cbo3 (66 aa).

One can recognise an LCN-type CS-alpha/beta domain in the interval 1–66 (KEGYIVNYHD…VWPLPKKTCN (66 aa)). Intrachain disulfides connect cysteine 12-cysteine 65, cysteine 16-cysteine 41, cysteine 25-cysteine 46, and cysteine 29-cysteine 48. Asparagine 66 is modified (asparagine amide).

Belongs to the long (4 C-C) scorpion toxin superfamily. Sodium channel inhibitor family. Beta subfamily. As to expression, expressed by the venom gland.

It is found in the secreted. Beta toxins bind voltage-independently at site-4 of sodium channels and shift the voltage of activation toward more negative potentials thereby affecting sodium channel activation and promoting spontaneous and repetitive firing. A mixture of Cbo2 and Cbo3 is weakly active on the human voltage-gated sodium channels Nav1.4/SCN4A and Nav1.6/SCN8A when tested at 200 nM. In vivo, is toxic to mice when intraperitoneally injected. The protein is Beta-toxin Cbo3 of Centruroides bonito (Scorpion).